We begin with the raw amino-acid sequence, 214 residues long: Rac-like GTP-binding protein 3 (214 aa).

Glycine 15 to threonine 22 contacts GTP. The Effector region motif lies at tyrosine 37 to phenylalanine 45. Residues aspartate 62–glutamine 66 and threonine 120–aspartate 123 each bind GTP.

The protein belongs to the small GTPase superfamily. Rho family. In terms of processing, may be palmitoylated.

It localises to the cytoplasm. It is found in the membrane. Inactive GDP-bound Rho GTPases reside in the cytosol, are found in a complex with Rho GDP-dissociation inhibitors (Rho GDIs), and are released from the GDI protein in order to translocate to membranes upon activation. This chain is Rac-like GTP-binding protein 3 (RAC3), found in Oryza sativa subsp. japonica (Rice).